The following is a 621-amino-acid chain: Putative zinc metalloprotease CPn_0344/CP_0416/CPj0344/CpB0350 (621 aa).

H20 contributes to the Zn(2+) binding site. E21 is a catalytic residue. Residue H24 participates in Zn(2+) binding. 3 helical membrane-spanning segments follow: residues I103–Y125, V561–V583, and I596–F613.

Belongs to the peptidase M50B family. The cofactor is Zn(2+).

It localises to the cell inner membrane. This chain is Putative zinc metalloprotease CPn_0344/CP_0416/CPj0344/CpB0350, found in Chlamydia pneumoniae (Chlamydophila pneumoniae).